Consider the following 426-residue polypeptide: Aspartate aminotransferase, mitochondrial (426 aa).

The transit peptide at 1–29 (MIRSARLISNIKFGQKNIRQFSTNTNWWA) directs the protein to the mitochondrion. Substrate is bound by residues Gly-60, Trp-156, and Asn-209. Lys-273 carries the N6-(pyridoxal phosphate)lysine modification. Residue Arg-401 coordinates substrate.

This sequence belongs to the class-I pyridoxal-phosphate-dependent aminotransferase family. In terms of assembly, homodimer. The cofactor is pyridoxal 5'-phosphate.

Its subcellular location is the mitochondrion matrix. The protein localises to the cell membrane. It catalyses the reaction L-aspartate + 2-oxoglutarate = oxaloacetate + L-glutamate. The catalysed reaction is L-kynurenine + 2-oxoglutarate = kynurenate + L-glutamate + H2O. Its function is as follows. Plays a key role in amino acid metabolism. Important for metabolite exchange between mitochondria and cytosol. The chain is Aspartate aminotransferase, mitochondrial (aatA) from Dictyostelium discoideum (Social amoeba).